We begin with the raw amino-acid sequence, 292 residues long: Hypersensitive-induced response protein 4 (292 aa).

A lipid anchor (N-myristoyl glycine) is attached at G2.

As to quaternary structure, self-interacts and forms heteromers. Interacts with NB-LRR class of R proteins before R proteins (e.g. RPS2 or RPM1) are activated by the effectors.

The protein localises to the cell membrane. The chain is Hypersensitive-induced response protein 4 (HIR4) from Arabidopsis thaliana (Mouse-ear cress).